The primary structure comprises 369 residues: S-(hydroxymethyl)glutathione dehydrogenase (369 aa).

Zn(2+)-binding residues include C40, H62, C92, C95, C98, C106, and C169.

It belongs to the zinc-containing alcohol dehydrogenase family. Class-III subfamily. Homodimer. It depends on Zn(2+) as a cofactor.

The protein resides in the cytoplasm. It catalyses the reaction S-(hydroxymethyl)glutathione + NADP(+) = S-formylglutathione + NADPH + H(+). It carries out the reaction S-(hydroxymethyl)glutathione + NAD(+) = S-formylglutathione + NADH + H(+). The enzyme catalyses a primary alcohol + NAD(+) = an aldehyde + NADH + H(+). The catalysed reaction is a secondary alcohol + NAD(+) = a ketone + NADH + H(+). It catalyses the reaction S-nitrosoglutathione + NADH + H(+) = S-(hydroxysulfenamide)glutathione + NAD(+). Its function is as follows. Has high formaldehyde dehydrogenase activity in the presence of glutathione and catalyzes the oxidation of normal alcohols in a reaction that is not GSH-dependent. In addition, hemithiolacetals other than those formed from GSH, including omega-thiol fatty acids, also are substrates. Also acts as a S-nitroso-glutathione reductase by catalyzing the NADH-dependent reduction of S-nitrosoglutathione. This chain is S-(hydroxymethyl)glutathione dehydrogenase (frmA), found in Escherichia coli (strain ATCC 8739 / DSM 1576 / NBRC 3972 / NCIMB 8545 / WDCM 00012 / Crooks).